Consider the following 862-residue polypeptide: DNA mismatch repair protein MutS (862 aa).

Glycine 621–serine 628 serves as a coordination point for ATP.

The protein belongs to the DNA mismatch repair MutS family.

Its function is as follows. This protein is involved in the repair of mismatches in DNA. It is possible that it carries out the mismatch recognition step. This protein has a weak ATPase activity. This chain is DNA mismatch repair protein MutS, found in Vibrio cholerae serotype O1 (strain ATCC 39541 / Classical Ogawa 395 / O395).